The primary structure comprises 310 residues: Porphobilinogen deaminase (310 aa).

Residue Cys241 is modified to S-(dipyrrolylmethanemethyl)cysteine.

Belongs to the HMBS family. Monomer. It depends on dipyrromethane as a cofactor.

The enzyme catalyses 4 porphobilinogen + H2O = hydroxymethylbilane + 4 NH4(+). The protein operates within porphyrin-containing compound metabolism; protoporphyrin-IX biosynthesis; coproporphyrinogen-III from 5-aminolevulinate: step 2/4. Tetrapolymerization of the monopyrrole PBG into the hydroxymethylbilane pre-uroporphyrinogen in several discrete steps. The protein is Porphobilinogen deaminase of Lysinibacillus sphaericus (strain C3-41).